We begin with the raw amino-acid sequence, 220 residues long: Small ribosomal subunit protein uS2 (220 aa).

This sequence belongs to the universal ribosomal protein uS2 family.

The sequence is that of Small ribosomal subunit protein uS2 from Methanococcus maripaludis (strain DSM 14266 / JCM 13030 / NBRC 101832 / S2 / LL).